We begin with the raw amino-acid sequence, 649 residues long: Glucan endo-1,3-beta-glucosidase btgC (649 aa).

Disordered stretches follow at residues 1 to 50 and 110 to 224; these read MGDR…AHTH and YHTT…AGGA. The Cytoplasmic segment spans residues 1–274; it reads MGDRSEQYGD…PRPSGASRKR (274 aa). The segment covering 144-157 has biased composition (low complexity); it reads GSSAALSAAGAPAG. Over residues 198-208 the composition is skewed to acidic residues; sequence NPDDILDDGDD. The helical; Signal-anchor for type II membrane protein transmembrane segment at 275 to 295 threads the bilayer; sequence GWIIGGILAFIVIGAIVGGAV. Residues 296–649 are Extracellular-facing; sequence GGTLGNRRSE…IPDCGGKTAA (354 aa). The disordered stretch occupies residues 301–329; the sequence is NRRSETASESSEVSADDDTETNGDLDKNS. Residues 314 to 323 are compositionally biased toward acidic residues; it reads SADDDTETNG. Asparagine 369, asparagine 392, and asparagine 420 each carry an N-linked (GlcNAc...) asparagine glycan. Residue glutamate 452 is the Proton donor of the active site. Glutamate 551 (nucleophile) is an active-site residue. N-linked (GlcNAc...) asparagine glycosylation occurs at asparagine 596.

This sequence belongs to the glycosyl hydrolase 17 family.

It localises to the cell membrane. The enzyme catalyses Hydrolysis of (1-&gt;3)-beta-D-glucosidic linkages in (1-&gt;3)-beta-D-glucans.. Glucanases play a role in cell expansion during growth, in cell-cell fusion during mating, and in spore release during sporulation. This enzyme may be involved in beta-glucan degradation. Active on laminarin and lichenan. The chain is Glucan endo-1,3-beta-glucosidase btgC (btgC) from Emericella nidulans (strain FGSC A4 / ATCC 38163 / CBS 112.46 / NRRL 194 / M139) (Aspergillus nidulans).